The primary structure comprises 362 residues: Glutamine synthetase (362 aa).

The GS beta-grasp domain occupies 26–107 (LIAEYIWIDS…VLSECWNADG (82 aa)). The GS catalytic domain occupies 114 to 362 (HRHEAAKLME…METCFGAVSE (249 aa)).

Belongs to the glutamine synthetase family. Homooctamer.

The protein localises to the cytoplasm. The enzyme catalyses L-glutamate + NH4(+) + ATP = L-glutamine + ADP + phosphate + H(+). This is Glutamine synthetase (gln-1) from Neurospora crassa (strain ATCC 24698 / 74-OR23-1A / CBS 708.71 / DSM 1257 / FGSC 987).